Consider the following 198-residue polypeptide: Cyclin-dependent kinase inhibitor 1B (198 aa).

The span at 1–12 (MSNVRVSNGSPT) shows a compositional bias: polar residues. The interval 1-30 (MSNVRVSNGSPTSERRDAKQAEYPKPSACR) is disordered. Phosphoserine; by UHMK1 is present on Ser-10. Over residues 13 to 22 (SERRDAKQAE) the composition is skewed to basic and acidic residues. Residues 51–91 (DMEEASQNKWNFDFQNHKPLEGKYEWQEVEKGSLPEFYYRP) are interaction with CDK2. Position 74 is a phosphotyrosine; by SRC (Tyr-74). The interval 87–198 (FYYRPPRPPK…KKPGLRRRQT (112 aa)) is disordered. Position 88 is a phosphotyrosine; by ABL, LYN and SRC (Tyr-88). At Tyr-89 the chain carries Phosphotyrosine. Positions 104–113 (QESQDVSGTR) are enriched in polar residues. Basic and acidic residues predominate over residues 126–137 (EDTHLVDQKTDA). The Nuclear localization signal motif lies at 153–169 (KRPATDDSSPQNKRANR). Position 157 is a phosphothreonine; by CaMK1, PKB/AKT1 and PIM1 (Thr-157). A Phosphothreonine modification is found at Thr-170. A compositionally biased stretch (polar residues) spans 175-186 (SDGSPNAGSVEQ). Thr-187 bears the Phosphothreonine; by PKB/AKT1, CDK1 and CDK2 mark. A Phosphothreonine; by CaMK1, PKB/AKT1, RPS6KA1, RPS6KA3 and PIM1 modification is found at Thr-198.

This sequence belongs to the CDI family. In terms of assembly, forms a ternary complex composed of CCNE1, CDK2 and CDKN1B. Interacts directly with CCNE1; the interaction is inhibited by CDK2-dependent phosphorylation on Thr-187. Interacts with COPS5, subunit of the COP9 signalosome complex; the interaction leads to CDKN1B degradation. Interacts with NUP50; the interaction leads to nuclear import and degradation of phosphorylated CDKN1B. Interacts with CCND1 and SNX6. Interacts (Thr-198-phosphorylated form) with 14-3-3 proteins, binds strongly YWHAQ, weakly YWHAE and YWHAH, but not YWHAB nor YWHAZ; the interaction with YWHAQ results in translocation to the cytoplasm. Interacts with AKT1 and LYN; the interactions lead to cytoplasmic mislocation, phosphorylation of CDKN1B and inhibition of cell cycle arrest. Forms a ternary complex with CCNA2 and CDK2; CDKN1B inhibits the kinase activity of CDK2 through conformational rearrangements. Interacts (unphosphorylated form) with CDK2. Forms a complex with CDK2 and SPDYA, but does not directly interact with SPDYA. Forms a ternary complex composed of cyclin D, CDK4 and CDKN1B. Interacts (phosphorylated on Tyr-88 and Tyr-89) with CDK4; the interaction is required for cyclin D and CDK4 complex assembly, induces nuclear translocation and activates the CDK4 kinase activity. Interacts with GRB2. Interacts with PIM1. Identified in a complex with SKP1, SKP2 and CKS1B. Interacts with UHMK1; the interaction leads to cytoplasmic mislocation, phosphorylation of CDKN1B and inhibition of cell cycle arrest. Also interacts with CDK1. Dephosphorylated on Thr-187 by PPM1H, leading to CDKN1B stability. In terms of processing, phosphorylated; phosphorylation occurs on serine, threonine and tyrosine residues. Phosphorylation on Ser-10 is the major site of phosphorylation in resting cells, takes place at the G(0)-G(1) phase and leads to protein stability. Phosphorylation on other sites is greatly enhanced by mitogens, growth factors, cMYC and in certain cancer cell lines. The phosphorylated form found in the cytoplasm is inactivate. Phosphorylation on Thr-198 is required for interaction with 14-3-3 proteins. Phosphorylation on Thr-187, by CDK1 and CDK2 leads to protein ubiquitination and proteasomal degradation. Tyrosine phosphorylation promotes this process. Phosphorylation by PKB/AKT1 can be suppressed by LY294002, an inhibitor of the catalytic subunit of PI3K. Phosphorylation on Tyr-88 and Tyr-89 has no effect on binding CDK2, but is required for binding CDK4. Dephosphorylated on tyrosine residues by G-CSF. Dephosphorylated on Thr-187 by PPM1H, leading to CDKN1B stability. Post-translationally, ubiquitinated; in the cytoplasm by the KPC complex (composed of RNF123/KPC1 and UBAC1/KPC2) and, in the nucleus, by SCF(SKP2). The latter requires prior phosphorylation on Thr-187. Ubiquitinated; by a TRIM21-containing SCF(SKP2)-like complex; leads to its degradation. Subject to degradation in the lysosome. Interaction with SNX6 promotes lysosomal degradation.

It is found in the nucleus. The protein localises to the cytoplasm. Its subcellular location is the endosome. In terms of biological role, important regulator of cell cycle progression. Inhibits the kinase activity of CDK2 bound to cyclin A, but has little inhibitory activity on CDK2 bound to SPDYA. Involved in G1 arrest. Potent inhibitor of cyclin E- and cyclin A-CDK2 complexes. Forms a complex with cyclin type D-CDK4 complexes and is involved in the assembly, stability, and modulation of CCND1-CDK4 complex activation. Acts either as an inhibitor or an activator of cyclin type D-CDK4 complexes depending on its phosphorylation state and/or stoichometry. In Canis lupus familiaris (Dog), this protein is Cyclin-dependent kinase inhibitor 1B (CDKN1B).